The primary structure comprises 764 residues: Polymeric immunoglobulin receptor (764 aa).

A signal peptide spans Met1–Thr18. The Ig-like V-type 1; required for binding to polymeric IgA and IgM domain occupies Lys19–Ser120. Topologically, residues Lys19–Arg638 are extracellular. 2 disulfide bridges follow: Cys40–Cys110 and Cys56–Cys64. 4 N-linked (GlcNAc...) asparagine glycosylation sites follow: Asn83, Asn90, Asn135, and Asn186. Ig-like V-type domains follow at residues Gly145 to Val237, Arg250 to Ile352, Gly364 to Ile458, and Pro462 to Ala561. Cystine bridges form between Cys152-Cys220, Cys257-Cys325, Cys271-Cys279, Cys371-Cys441, and Cys385-Cys395. N-linked (GlcNAc...) asparagine glycosylation occurs at Asn421. N-linked (GlcNAc...) (complex) asparagine glycosylation is present at Asn469. Cystine bridges form between Cys482-Cys544, Cys486-Cys520, and Cys496-Cys503. Asn499 carries N-linked (GlcNAc...) asparagine glycosylation. Residues Lys609–Asp619 show a composition bias toward basic and acidic residues. Residues Lys609–Ser637 form a disordered region. The segment covering Ser627–Ser637 has biased composition (low complexity). The helical transmembrane segment at Ala639–Ala661 threads the bilayer. Residues Arg662–Ala764 lie on the Cytoplasmic side of the membrane. Ser673, Ser682, Ser689, and Ser735 each carry phosphoserine. The interval Ala717–Glu738 is disordered. Basic and acidic residues predominate over residues Thr723–Glu738.

Interacts (mainly via CDR1-like domain) with dimeric IgA. Interacts (mainly via CDR2-like domain) with pentameric IgM. In terms of assembly, either free or part of the secretory IgA (sIgA) complex that consists of two, four or five IgA monomers, and two additional non-Ig polypeptides, namely the JCHAIN and the secretory component (the proteolytic product of PIGR). Free secretory component interacts with bacterial antigens toxA of C.difficile and eaeA of E.coli. Post-translationally, N-glycosylated. N-glycosylation is required for anchoring IgA molecules to mucus, but is not necessary for Ig binding.

It is found in the cell membrane. The protein resides in the secreted. Mediates selective transcytosis of polymeric IgA and IgM across mucosal epithelial cells. Binds polymeric IgA and IgM at the basolateral surface of epithelial cells. The complex is then transported across the cell to be secreted at the apical surface. During this process, a cleavage occurs that separates the extracellular (known as the secretory component) from the transmembrane segment. In terms of biological role, through its N-linked glycans ensures anchoring of secretory IgA (sIgA) molecules to mucus lining the epithelial surface to neutralize extracellular pathogens. On its own (free form) may act as a non-specific microbial scavenger to prevent pathogen interaction with epithelial cells. This chain is Polymeric immunoglobulin receptor (PIGR), found in Homo sapiens (Human).